Consider the following 653-residue polypeptide: Dystrotelin (653 aa).

A ZZ-type zinc finger spans residues T223–S279. C228, C231, C243, C246, C252, C255, H265, and H269 together coordinate Zn(2+). Positions R384 to T411 form a coiled coil.

In terms of tissue distribution, strongly expressed in the nervous and muscular tissues.

The protein localises to the cell membrane. The polypeptide is Dystrotelin (Dytn) (Mus musculus (Mouse)).